Reading from the N-terminus, the 579-residue chain is Nuclear hormone receptor family member nhr-71 (579 aa).

The segment at residues 8–83 (SQECMVCSAP…AGMKIGAVQP (76 aa)) is a DNA-binding region (nuclear receptor). NR C4-type zinc fingers lie at residues 11–31 (CMVCSAPADGLHYGAISCRSC) and 47–71 (CKHTNTCLIDPDGRCACRSCRFTKC). 2 disordered regions span residues 82–124 (QPRR…SDGP) and 168–189 (EPIPSTSSAPEKQSCQSSPNDD). Composition is skewed to polar residues over residues 106-124 (SMNNSPLERNGNSFSSDGP) and 171-186 (PSTSSAPEKQSCQSSP). The NR LBD domain occupies 189–452 (DEQQEFNHLV…KFWYETLCYA (264 aa)).

Belongs to the nuclear hormone receptor family.

It is found in the nucleus. Orphan nuclear receptor. The protein is Nuclear hormone receptor family member nhr-71 (nhr-71) of Caenorhabditis elegans.